Consider the following 302-residue polypeptide: Putative F-box protein At1g32420 (302 aa).

Residues methionine 1 to histidine 10 show a composition bias toward basic and acidic residues. The tract at residues methionine 1–serine 27 is disordered. Positions lysine 31–isoleucine 78 constitute an F-box domain.

The polypeptide is Putative F-box protein At1g32420 (Arabidopsis thaliana (Mouse-ear cress)).